Reading from the N-terminus, the 102-residue chain is Urease subunit beta (102 aa).

This sequence belongs to the urease beta subunit family. In terms of assembly, heterotrimer of UreA (gamma), UreB (beta) and UreC (alpha) subunits. Three heterotrimers associate to form the active enzyme.

It localises to the cytoplasm. It catalyses the reaction urea + 2 H2O + H(+) = hydrogencarbonate + 2 NH4(+). It functions in the pathway nitrogen metabolism; urea degradation; CO(2) and NH(3) from urea (urease route): step 1/1. This Methylibium petroleiphilum (strain ATCC BAA-1232 / LMG 22953 / PM1) protein is Urease subunit beta.